The sequence spans 837 residues: MKLSPREIEKLDLHNAGYLAQKRLARGLRLNYVETVALIATQILEFVRDGEKTVAQLMCIGRELLGRKQVLPAVPHLVESVQVEATFRDGTKLVTIHDLFACENGNLELALFGSFLPVPSLDKFTENEEDHRTPGEIICRSENLILNPRRNAIILRVVNKGDRPIQVGSHYHFIEVNPYLTFDRRKAYGMRLNIAAGNATRFEPGECKSVVLVSIGGNKVIRGGNNIADGPVNDSNCRAAMKAVVTRGFGHVEEENAREGVTGEDYSLTTVISREEYAHKYGPTTGDKIRLGDTDLFAEIEKDFAVYGDECVFGGGKVIRDGMGQSSGHPPEGSLDTVITNAVIIDYTGIIKADIGIKDGLIISTGKAGNPDIMNDVFPNMIIGANTEVIAGEGLIVTAGAIDCHVHFICPQLVYDAVTSGITTLVGGGTGPADGTRATTCTPAPNQMKLMLQSTDDMPLNFGFTGKGNSAKPDELHEIIRAGAMGLKLHEDWGTTPAAIDSCLTVADQYDIQVNIHTDTLNESGFVEHTIAAFKGRTIHTYHSEGAGGGHAPDIIKVCGEKNVLPSSTNPTRPYTHNTIDEHLDMLMVCHHLNKNIPEDVAFAESRIRAETIAAEDILHDKGAISIISSDSQAMGRIGEVISRTWQTADKMKSQRGPLQPGEDNDNFRIKRYVAKYTINPAIANGLSQYVGSVEAGKLADLVLWKPSFFGAKPEMVIKGGEVAYANMGDPNASIPTPEPVIMRPMFGAFGKAGSSHSIAFVSKAALDEGVKASYGLNKRVEAVKNVRKLTKRDMKLNDTLPQITVDPETYTVTADGEVLTCTAAKTVPLSRNYFLF.

A Urease domain is found at 400 to 837; it reads GAIDCHVHFI…VPLSRNYFLF (438 aa). Ni(2+)-binding residues include His405, His407, and Lys488. Residue Lys488 is modified to N6-carboxylysine. Residue His490 participates in substrate binding. Positions 517 and 543 each coordinate Ni(2+). His591 acts as the Proton donor in catalysis. Asp631 lines the Ni(2+) pocket.

Belongs to the metallo-dependent hydrolases superfamily. Urease alpha subunit family. In terms of assembly, homohexamer. Other oligomeric forms may exist depending on pH and presence of salts. Ni(2+) is required as a cofactor. Carboxylation allows a single lysine to coordinate two nickel ions.

The enzyme catalyses urea + 2 H2O + H(+) = hydrogencarbonate + 2 NH4(+). Its pathway is nitrogen metabolism; urea degradation; CO(2) and NH(3) from urea (urease route): step 1/1. Functionally, catalyzes the conversion of urea to ammonia and carbon dioxide, thus allowing organisms to use exogenous and internally generated urea as a nitrogen source. May be involved in plant defense to pathogenic fungi. This is Urease from Glycine max (Soybean).